The following is a 551-amino-acid chain: Gliomedin (551 aa).

At 1 to 17 (MARGAEGGRGDAGWGLR) the chain is on the cytoplasmic side. The chain crosses the membrane as a helical; Signal-anchor for type II membrane protein span at residues 18-39 (GALAAVALLSALNAAGTVFALC). The Extracellular segment spans residues 40–551 (QWRGLSSALR…VQFLSTTLNQ (512 aa)). Residues 72–107 (LSRAPRGASAPPQDPASSARNKRSHSGEPAPHIRAE) form a disordered region. Residues 79–90 (ASAPPQDPASSA) show a composition bias toward low complexity. The N-linked (GlcNAc...) asparagine glycan is linked to asparagine 130. Collagen-like domains lie at 137 to 195 (LTGP…RGEK) and 196 to 222 (GDHG…KGDV). A disordered region spans residues 139 to 282 (GPSGPPGPPG…GETCAIPNDD (144 aa)). Basic and acidic residues-rich tracts occupy residues 191–200 (ERGEKGDHGE) and 213–222 (KGEKGDKGDV). Residues 237–253 (PPGPPGPPGPPGPPGPP) show a composition bias toward pro residues. An Olfactomedin-like domain is found at 299 to 546 (QAESMITSIG…LMLYPVQFLS (248 aa)). N-linked (GlcNAc...) asparagine glycans are attached at residues asparagine 329, asparagine 357, asparagine 378, and asparagine 464.

As to quaternary structure, homotrimer (via collagen-like domains). Interacts with NRCAM and NFASC/neurofascin. Interaction with glial NRCAM enhances interaction with axonal NFASC. Interacts with MYOC. Post-translationally, N-glycosylated. In terms of processing, proteolytic processing by a furin-like protease causes shedding of the ectodomain. Further cleavage by BMP1 releases the olfactomedin-like domain. As to expression, specifically expressed in spinal cord, brain, placenta and sciatic nerve. More abundant in peripheral than central nervous system.

The protein resides in the cell membrane. The protein localises to the cell projection. It localises to the axon. Its subcellular location is the secreted. It is found in the extracellular space. The protein resides in the extracellular matrix. In terms of biological role, ligand for NRCAM and NFASC/neurofascin that plays a role in the formation and maintenance of the nodes of Ranvier on myelinated axons. Mediates interaction between Schwann cell microvilli and axons via its interactions with NRCAM and NFASC. Nodes of Ranvier contain clustered sodium channels that are crucial for the saltatory propagation of action potentials along myelinated axons. During development, nodes of Ranvier are formed by the fusion of two heminodes. Required for normal clustering of sodium channels at heminodes; not required for the formation of mature nodes with normal sodium channel clusters. Required, together with NRCAM, for maintaining NFASC and sodium channel clusters at mature nodes of Ranvier. This is Gliomedin (GLDN) from Homo sapiens (Human).